A 544-amino-acid chain; its full sequence is Exodeoxyribonuclease 7 large subunit (544 aa).

A disordered region spans residues 522–544; it reads PETPPKSRKADNPPEPPEQTSFL.

Belongs to the XseA family. In terms of assembly, heterooligomer composed of large and small subunits.

The protein localises to the cytoplasm. It catalyses the reaction Exonucleolytic cleavage in either 5'- to 3'- or 3'- to 5'-direction to yield nucleoside 5'-phosphates.. Its function is as follows. Bidirectionally degrades single-stranded DNA into large acid-insoluble oligonucleotides, which are then degraded further into small acid-soluble oligonucleotides. This Zymomonas mobilis subsp. mobilis (strain ATCC 31821 / ZM4 / CP4) protein is Exodeoxyribonuclease 7 large subunit.